The following is a 418-amino-acid chain: MSATLFNNIELLPPDALFGIKQRYGQDQRATKVDLGIGAYRDDNGKPWVLPSVKAAEKLIHNDSSYNHEYLGITGLPSLTSNAAKIIFGTQSDAFQEDRVISVQSLSGTGALHISAKFFSKFFPDKLVYLSKPTWANHMAIFENQGLKTATYPYWANETKSLDLNGFLNAIQKAPEGSIFVLHSCAHNPTGLDPTSEQWVQIVDAIASKNHIALFDTAYQGFATGDLDKDAYAVRLGVEKLSTVSPVFVCQSFAKNAGMYGERVGCFHLALTKQAQNKTIKPAVTSQLAKIIRSEVSNPPAYGAKIVAKLLETPELTEQWHKDMVTMSSRITKMRHALRDHLVKLGTPGNWDHIVNQCGMFSFTGLTPQMVKRLEETHAVYLVASGRASIAGLNQGNVEYVAKAIDEVVRFYTIEAKL.

Position 2 is an N-acetylserine (Ser2). Residues Gly38, Trp135, and Asn188 each coordinate L-aspartate. N6-(pyridoxal phosphate)lysine is present on Lys255. L-aspartate is bound at residue Arg387. A Phosphoserine modification is found at Ser389.

This sequence belongs to the class-I pyridoxal-phosphate-dependent aminotransferase family. As to quaternary structure, homodimer. It depends on pyridoxal 5'-phosphate as a cofactor.

The protein localises to the cytoplasm. Its subcellular location is the peroxisome. The catalysed reaction is L-aspartate + 2-oxoglutarate = oxaloacetate + L-glutamate. In terms of biological role, plays a key role in amino acid metabolism. The polypeptide is Aspartate aminotransferase, cytoplasmic (AAT2) (Saccharomyces cerevisiae (strain ATCC 204508 / S288c) (Baker's yeast)).